The sequence spans 99 residues: DNA-binding protein Fis (99 aa).

Positions 75-94 (QTRAALMLGVNRGTLRKKLK) form a DNA-binding region, H-T-H motif.

Belongs to the transcriptional regulatory Fis family. Homodimer.

Its function is as follows. Activates ribosomal RNA transcription. Plays a direct role in upstream activation of rRNA promoters. The chain is DNA-binding protein Fis from Actinobacillus succinogenes (strain ATCC 55618 / DSM 22257 / CCUG 43843 / 130Z).